A 567-amino-acid chain; its full sequence is Cytochrome P450 monooxygenase 231 (567 aa).

A helical membrane pass occupies residues V3 to Y23. N-linked (GlcNAc...) asparagine glycosylation is found at N81 and N223. C475 contributes to the heme binding site.

This sequence belongs to the cytochrome P450 family. It depends on heme as a cofactor.

Its subcellular location is the membrane. It participates in secondary metabolite biosynthesis. Functionally, cytochrome P450 monooxygenase that is able to use anthracene, carbazole, pyrene, and phenanthrene as substrates for oxidation. These multifunctional properties against a series of polycyclic aromatic hydrocarbons (PAHs) suggest that CYP231 would play important roles, at least in part, in fungal metabolic systems involved in xenobiotic detoxification. This chain is Cytochrome P450 monooxygenase 231, found in Postia placenta (strain ATCC 44394 / Madison 698-R) (Brown rot fungus).